The primary structure comprises 644 residues: L-aspartate oxidase 2-a, chloroplastic (644 aa).

Residues S94–A97, K116, N123–G130, and D294 contribute to the FAD site. The active-site Proton donor/acceptor is R369. FAD is bound by residues E454 and S470 to L471.

Belongs to the FAD-dependent oxidoreductase 2 family. NadB subfamily. FAD is required as a cofactor.

It is found in the plastid. It localises to the chloroplast. The catalysed reaction is L-aspartate + O2 = iminosuccinate + H2O2. The protein operates within alkaloid biosynthesis; nicotine biosynthesis. Its pathway is cofactor biosynthesis; NAD(+) biosynthesis; iminoaspartate from L-aspartate (oxidase route): step 1/1. Involved in the biosynthesis of pyridine alkaloid natural products, leading mainly to the production of anabasine, anatabine, nicotine and nornicotine, effective deterrents against herbivores with antiparasitic and pesticide properties (neurotoxins); nornicotine serves as the precursor in the synthesis of the carcinogen compound N'-nitrosonornicotine (NNN). Catalyzes the oxidation of L-aspartate to iminoaspartate. This is L-aspartate oxidase 2-a, chloroplastic from Nicotiana tabacum (Common tobacco).